A 24-amino-acid polypeptide reads, in one-letter code: Gaegurin-6 (24 aa).

A disulfide bond links C18 and C24.

The protein belongs to the frog skin active peptide (FSAP) family. Brevinin subfamily. Monomer. Expressed by the skin glands.

The protein resides in the secreted. Its function is as follows. Has a non-hemolytic activity. Has a broad spectrum of activity against both Gram-positive and Gram-negative bacteria, fungi and protozoa. The polypeptide is Gaegurin-6 (GGN6) (Glandirana rugosa (Japanese wrinkled frog)).